Here is a 378-residue protein sequence, read N- to C-terminus: L-asparaginase-like protein GF11609 (378 aa).

Positions 1-21 (MCSPLPLLILRLLLLTHPSLG) are cleaved as a signal peptide. 3 disulfides stabilise this stretch: Cys-71-Cys-76, Cys-170-Cys-186, and Cys-325-Cys-352.

This sequence belongs to the Ntn-hydrolase family.

The chain is L-asparaginase-like protein GF11609 from Drosophila ananassae (Fruit fly).